We begin with the raw amino-acid sequence, 247 residues long: Trypsin-4 (247 aa).

Positions 1–15 (MKISIFFAFLGAAVA) are cleaved as a signal peptide. Positions 16-23 (LPVNDDDK) are cleaved as a propeptide — activation peptide. The Peptidase S1 domain maps to 24–245 (IVGGYTCPKH…YLSWIQETMA (222 aa)). 6 disulfides stabilise this stretch: Cys-30/Cys-161, Cys-49/Cys-65, Cys-133/Cys-234, Cys-140/Cys-207, Cys-172/Cys-186, and Cys-197/Cys-221. Residue His-64 is the Charge relay system of the active site. The Ca(2+) site is built by Glu-76, Asn-78, Val-81, and Glu-86. Asp-108 acts as the Charge relay system in catalysis. Ser-201 serves as the catalytic Charge relay system.

It belongs to the peptidase S1 family. It depends on Ca(2+) as a cofactor. Proteolytically cleaved and activated by an autocatalytic mechanism. Cleavage by CTRC inhibits autoactivation.

Its subcellular location is the secreted. The protein localises to the extracellular space. It carries out the reaction Preferential cleavage: Arg-|-Xaa, Lys-|-Xaa.. Its activity is regulated as follows. Activated by autocatalytic cleavage. Cleavage by CTRC inhibits autoactivation. Functionally, serine protease capable of autoactivation. The chain is Trypsin-4 from Rattus norvegicus (Rat).